A 469-amino-acid polypeptide reads, in one-letter code: MTIHQSPEAFGYDAFLRQHQNKEVLRFITCGSVDDGKSTLIGRLLHDTKQIFDDQVTALQRDSRKHGTQGGEVDFALLVDGLQAEREQGITIDVAYRFFSTDRRSFIVADTPGHEQYTRNMATGASTADLAVILVDARHGLTRQSRRHALLVSLLGIRRVALAINKMDLVGWSQDKFEAIVSGFQAFAAPLNFTEVRAIPLSAKNGDNVVLPGTAATWYTDVPLLRYLEEVPVKSEERAAAFRMPVQWVNRPNSDFRGFSGLIASGSVAPGDAVTVAPSGKTSTIARIFTADGDLERASEGQSVTLVLADEVDASRGAVIATSDAPLTLTDSLDVRLFWAAESDLVPGANLWAKVGTQTVNAVVKAVHRRIDPETGQAGPADKLAVNDIGDVTLTLDRQIAVDPYAENRDTGSLILIDRETTDTAALGLVQTIVASSKVAPAPTASVTASAEPARSGGLLAGLKRLFGG.

The region spanning 22–237 (KEVLRFITCG…LEEVPVKSEE (216 aa)) is the tr-type G domain. Residues 31–38 (GSVDDGKS) form a G1 region. A GTP-binding site is contributed by 31-38 (GSVDDGKS). Positions 89-93 (GITID) are G2. A G3 region spans residues 110–113 (DTPG). Residues 110–114 (DTPGH) and 165–168 (NKMD) each bind GTP. The interval 165–168 (NKMD) is G4. The tract at residues 202–204 (SAK) is G5.

The protein belongs to the TRAFAC class translation factor GTPase superfamily. Classic translation factor GTPase family. CysN/NodQ subfamily. Heterodimer composed of CysD, the smaller subunit, and CysN.

It carries out the reaction sulfate + ATP + H(+) = adenosine 5'-phosphosulfate + diphosphate. The protein operates within sulfur metabolism; hydrogen sulfide biosynthesis; sulfite from sulfate: step 1/3. Functionally, with CysD forms the ATP sulfurylase (ATPS) that catalyzes the adenylation of sulfate producing adenosine 5'-phosphosulfate (APS) and diphosphate, the first enzymatic step in sulfur assimilation pathway. APS synthesis involves the formation of a high-energy phosphoric-sulfuric acid anhydride bond driven by GTP hydrolysis by CysN coupled to ATP hydrolysis by CysD. The sequence is that of Sulfate adenylyltransferase subunit 1 from Methylorubrum extorquens (strain CM4 / NCIMB 13688) (Methylobacterium extorquens).